The following is a 369-amino-acid chain: Peptide chain release factor 2 (369 aa).

At Gln252 the chain carries N5-methylglutamine.

This sequence belongs to the prokaryotic/mitochondrial release factor family. Methylated by PrmC. Methylation increases the termination efficiency of RF2.

The protein localises to the cytoplasm. Functionally, peptide chain release factor 2 directs the termination of translation in response to the peptide chain termination codons UGA and UAA. This chain is Peptide chain release factor 2, found in Staphylococcus aureus (strain MRSA252).